We begin with the raw amino-acid sequence, 309 residues long: Dihydroorotate dehydrogenase B (NAD(+)), catalytic subunit (309 aa).

Residues S21 and 45 to 46 contribute to the FMN site; that span reads KA. Residues K45 and 69–73 each bind substrate; that span reads NAIGL. FMN-binding residues include N99 and N127. A substrate-binding site is contributed by N127. Catalysis depends on C130, which acts as the Nucleophile. FMN is bound by residues K165 and I191. Residue 192–193 coordinates substrate; the sequence is NT. Residues G217, 243-244, and 265-266 contribute to the FMN site; these read GG and GT.

This sequence belongs to the dihydroorotate dehydrogenase family. Type 1 subfamily. As to quaternary structure, heterotetramer of 2 PyrK and 2 PyrD type B subunits. Requires FMN as cofactor.

It is found in the cytoplasm. The catalysed reaction is (S)-dihydroorotate + NAD(+) = orotate + NADH + H(+). The protein operates within pyrimidine metabolism; UMP biosynthesis via de novo pathway; orotate from (S)-dihydroorotate (NAD(+) route): step 1/1. In terms of biological role, catalyzes the conversion of dihydroorotate to orotate with NAD(+) as electron acceptor. The sequence is that of Dihydroorotate dehydrogenase B (NAD(+)), catalytic subunit (pyrD) from Bacillus cereus (strain ATCC 14579 / DSM 31 / CCUG 7414 / JCM 2152 / NBRC 15305 / NCIMB 9373 / NCTC 2599 / NRRL B-3711).